Consider the following 56-residue polypeptide: Large ribosomal subunit protein bL33 (56 aa).

This sequence belongs to the bacterial ribosomal protein bL33 family.

The chain is Large ribosomal subunit protein bL33 from Ehrlichia canis (strain Jake).